Consider the following 737-residue polypeptide: Polyribonucleotide nucleotidyltransferase (737 aa).

Mg(2+) contacts are provided by aspartate 489 and aspartate 495. The 60-residue stretch at 556–615 folds into the KH domain; the sequence is PKIDTIKIDVDKIKIVIGKGGETIDKIIAETGVKIDIDEEGNVSIYSSDQDAINRAKEII. The region spanning 625-693 is the S1 motif domain; it reads DEVYRAKVVR…EKGRIDASMK (69 aa). The segment at 691–737 is disordered; sequence SMKALLPRPPKPEHDEKGEKSERPHRPRHQKDYKPKKEFTETSKDSE. Basic and acidic residues predominate over residues 700-737; sequence PKPEHDEKGEKSERPHRPRHQKDYKPKKEFTETSKDSE.

It belongs to the polyribonucleotide nucleotidyltransferase family. Mg(2+) serves as cofactor.

The protein resides in the cytoplasm. It catalyses the reaction RNA(n+1) + phosphate = RNA(n) + a ribonucleoside 5'-diphosphate. In terms of biological role, involved in mRNA degradation. Catalyzes the phosphorolysis of single-stranded polyribonucleotides processively in the 3'- to 5'-direction. This Streptococcus pneumoniae serotype 4 (strain ATCC BAA-334 / TIGR4) protein is Polyribonucleotide nucleotidyltransferase.